We begin with the raw amino-acid sequence, 162 residues long: Transcription elongation factor GreA (162 aa).

The stretch at 48 to 76 (NSEYQSAKDEQAFVEGRVKQLQQMIQFAQ) forms a coiled coil. Positions 111–132 (GSAESDPLSGKISNDSPMGKAL) are disordered.

It belongs to the GreA/GreB family.

Functionally, necessary for efficient RNA polymerase transcription elongation past template-encoded arresting sites. The arresting sites in DNA have the property of trapping a certain fraction of elongating RNA polymerases that pass through, resulting in locked ternary complexes. Cleavage of the nascent transcript by cleavage factors such as GreA or GreB allows the resumption of elongation from the new 3'terminus. GreA releases sequences of 2 to 3 nucleotides. This is Transcription elongation factor GreA from Oenococcus oeni (strain ATCC BAA-331 / PSU-1).